Reading from the N-terminus, the 217-residue chain is 3-demethoxyubiquinol 3-hydroxylase (217 aa).

Fe cation contacts are provided by glutamate 66, glutamate 96, histidine 99, glutamate 148, glutamate 180, and histidine 183.

This sequence belongs to the COQ7 family. It depends on Fe cation as a cofactor.

It is found in the cell membrane. It carries out the reaction a 5-methoxy-2-methyl-3-(all-trans-polyprenyl)benzene-1,4-diol + AH2 + O2 = a 3-demethylubiquinol + A + H2O. The protein operates within cofactor biosynthesis; ubiquinone biosynthesis. In terms of biological role, catalyzes the hydroxylation of 2-nonaprenyl-3-methyl-6-methoxy-1,4-benzoquinol during ubiquinone biosynthesis. This Ralstonia pickettii (strain 12J) protein is 3-demethoxyubiquinol 3-hydroxylase.